The sequence spans 357 residues: sn-glycerol-3-phosphate import ATP-binding protein UgpC (357 aa).

In terms of domain architecture, ABC transporter spans 4–235 (LKLQAVTKSY…PASLFVASFI (232 aa)). Position 37–44 (37–44 (GPSGCGKS)) interacts with ATP.

It belongs to the ABC transporter superfamily. sn-glycerol-3-phosphate importer (TC 3.A.1.1.3) family. As to quaternary structure, the complex is composed of two ATP-binding proteins (UgpC), two transmembrane proteins (UgpA and UgpE) and a solute-binding protein (UgpB).

Its subcellular location is the cell inner membrane. It carries out the reaction sn-glycerol 3-phosphate(out) + ATP + H2O = sn-glycerol 3-phosphate(in) + ADP + phosphate + H(+). Part of the ABC transporter complex UgpBAEC involved in sn-glycerol-3-phosphate (G3P) import. Responsible for energy coupling to the transport system. This is sn-glycerol-3-phosphate import ATP-binding protein UgpC from Yersinia pestis bv. Antiqua (strain Antiqua).